The chain runs to 157 residues: Selenoprotein F (157 aa).

The first 19 residues, 1–19 (MSGEVYILWLLSLIQTLSA), serve as a signal peptide directing secretion. A non-standard amino acid (selenocysteine) is located at residue Sec84.

It belongs to the selenoprotein M/F family. Expressed in the brain, liver and retina. Localized to the retinal ganglion cell layer, the inner nuclear layer and the outer nuclear layer at both parr and smolt stages.

The protein resides in the endoplasmic reticulum lumen. In terms of biological role, may be involved in redox reactions associated with the formation of disulfide bonds. May contribute to the quality control of protein folding in the endoplasmic reticulum. May be involved in retinal development. The protein is Selenoprotein F of Oncorhynchus mykiss (Rainbow trout).